Reading from the N-terminus, the 522-residue chain is Bifunctional purine biosynthesis protein PurH (522 aa).

In terms of domain architecture, MGS-like spans 1-145; the sequence is MKPIARALIS…KNHAAVTVIV (145 aa).

Belongs to the PurH family.

The catalysed reaction is (6R)-10-formyltetrahydrofolate + 5-amino-1-(5-phospho-beta-D-ribosyl)imidazole-4-carboxamide = 5-formamido-1-(5-phospho-D-ribosyl)imidazole-4-carboxamide + (6S)-5,6,7,8-tetrahydrofolate. It catalyses the reaction IMP + H2O = 5-formamido-1-(5-phospho-D-ribosyl)imidazole-4-carboxamide. The protein operates within purine metabolism; IMP biosynthesis via de novo pathway; 5-formamido-1-(5-phospho-D-ribosyl)imidazole-4-carboxamide from 5-amino-1-(5-phospho-D-ribosyl)imidazole-4-carboxamide (10-formyl THF route): step 1/1. Its pathway is purine metabolism; IMP biosynthesis via de novo pathway; IMP from 5-formamido-1-(5-phospho-D-ribosyl)imidazole-4-carboxamide: step 1/1. This chain is Bifunctional purine biosynthesis protein PurH, found in Nitrosococcus oceani (strain ATCC 19707 / BCRC 17464 / JCM 30415 / NCIMB 11848 / C-107).